The sequence spans 317 residues: Eukaryotic translation initiation factor 2 subunit 2 (317 aa).

The tract at residues 1–146 (MSATEEENVL…KEKTITTSDG (146 aa)) is disordered. Residues 79–90 (AIEKLENEGAHD) are compositionally biased toward basic and acidic residues. Residues 109–125 (KSSTTTTTSTTTTTTEP) are compositionally biased toward low complexity. The C4-type zinc-finger motif lies at 222–246 (HVYNYVFAELGTNGSIDGNQRLVIR).

This sequence belongs to the eIF-2-beta/eIF-5 family. Eukaryotic translation initiation factor 2 eIF2 is a heterotrimeric complex composed of an alpha, a beta and a gamma subunit.

The protein resides in the cytoplasm. The protein localises to the cytosol. In terms of biological role, component of the eIF2 complex that functions in the early steps of protein synthesis by forming a ternary complex with GTP and initiator tRNA. This complex binds to a 40S ribosomal subunit, followed by mRNA binding to form a 43S pre-initiation complex (43S PIC). Junction of the 60S ribosomal subunit to form the 80S initiation complex is preceded by hydrolysis of the GTP bound to eIF2 and release of an eIF2-GDP binary complex. In order for eIF2 to recycle and catalyze another round of initiation, the GDP bound to eIF2 must exchange with GTP by way of a reaction catalyzed by eIF2B. This Dictyostelium discoideum (Social amoeba) protein is Eukaryotic translation initiation factor 2 subunit 2 (eif2s2).